Consider the following 277-residue polypeptide: MAPTTDPAVNELKSTVHKLEQRIAELEGRLSGHGGGSSSAQESVRMILMGPPGAGKGTQAPRIKEKFCACHLATGDMLRAQVAAKTPLGREAKKIMDAGGLVSDEIMVNMIKTELENNQECAKGFILDGFPRTVTQAEKLDGMLEATQKPLQHAVELQIDDQLLVSRITGRLVHPASGRSYHKIFNPPKAPMTDDATGEPLIQRSDDNEETLKKRLSTYHAQTSPVVAYYQKTGIWKPVDASQDPGQVWKSLLKIFDDKAYVAGRSGSLLNKIGLKN.

Glycine 53 to threonine 58 provides a ligand contact to ATP. An NMP region spans residues alanine 73–valine 102. AMP-binding positions include threonine 74, arginine 79, glycine 100–valine 102, glycine 129–arginine 132, and glutamine 136. Positions glycine 170–aspartate 207 are LID. ATP contacts are provided by residues arginine 171 and serine 180 to tyrosine 181. Arginine 204 and arginine 215 together coordinate AMP. Glutamine 243 contacts ATP.

The protein belongs to the adenylate kinase family. AK2 subfamily. In terms of assembly, monomer.

Its subcellular location is the cytoplasm. It is found in the cytosol. The protein resides in the mitochondrion intermembrane space. It carries out the reaction AMP + ATP = 2 ADP. Functionally, catalyzes the reversible transfer of the terminal phosphate group between ATP and AMP. Plays an important role in cellular energy homeostasis and in adenine nucleotide metabolism. Adenylate kinase activity is critical for regulation of the phosphate utilization and the AMP de novo biosynthesis pathways. The sequence is that of Adenylate kinase from Phaeosphaeria nodorum (strain SN15 / ATCC MYA-4574 / FGSC 10173) (Glume blotch fungus).